The chain runs to 464 residues: 3-ketoacyl-CoA synthase 19 (464 aa).

A helical membrane pass occupies residues 3–25 (LFSLSSLLLLSTLFVFYIFKFVF). Residues 24–318 (VFKRRNQRNC…AIVRALKRRT (295 aa)) form the FAE domain. Active-site residues include Cys172, His251, His339, His343, His372, and Asn376.

It belongs to the thiolase-like superfamily. Chalcone/stilbene synthases family. In terms of tissue distribution, expressed in siliques.

The protein localises to the membrane. It carries out the reaction a very-long-chain acyl-CoA + malonyl-CoA + H(+) = a very-long-chain 3-oxoacyl-CoA + CO2 + CoA. Its pathway is lipid metabolism; fatty acid biosynthesis. The chain is 3-ketoacyl-CoA synthase 19 from Arabidopsis thaliana (Mouse-ear cress).